Consider the following 232-residue polypeptide: Phosphatidylserine decarboxylase proenzyme (232 aa).

Ser190 (schiff-base intermediate with substrate; via pyruvic acid) is an active-site residue. Ser190 bears the Pyruvic acid (Ser); by autocatalysis mark.

It belongs to the phosphatidylserine decarboxylase family. PSD-A subfamily. As to quaternary structure, heterodimer of a large membrane-associated beta subunit and a small pyruvoyl-containing alpha subunit. It depends on pyruvate as a cofactor. In terms of processing, is synthesized initially as an inactive proenzyme. Formation of the active enzyme involves a self-maturation process in which the active site pyruvoyl group is generated from an internal serine residue via an autocatalytic post-translational modification. Two non-identical subunits are generated from the proenzyme in this reaction, and the pyruvate is formed at the N-terminus of the alpha chain, which is derived from the carboxyl end of the proenzyme. The post-translation cleavage follows an unusual pathway, termed non-hydrolytic serinolysis, in which the side chain hydroxyl group of the serine supplies its oxygen atom to form the C-terminus of the beta chain, while the remainder of the serine residue undergoes an oxidative deamination to produce ammonia and the pyruvoyl prosthetic group on the alpha chain.

The protein resides in the cell membrane. The catalysed reaction is a 1,2-diacyl-sn-glycero-3-phospho-L-serine + H(+) = a 1,2-diacyl-sn-glycero-3-phosphoethanolamine + CO2. It participates in phospholipid metabolism; phosphatidylethanolamine biosynthesis; phosphatidylethanolamine from CDP-diacylglycerol: step 2/2. In terms of biological role, catalyzes the formation of phosphatidylethanolamine (PtdEtn) from phosphatidylserine (PtdSer). This Beijerinckia indica subsp. indica (strain ATCC 9039 / DSM 1715 / NCIMB 8712) protein is Phosphatidylserine decarboxylase proenzyme.